We begin with the raw amino-acid sequence, 170 residues long: Mitotic-spindle organizing protein 2B (170 aa).

2 disordered regions span residues 1 to 26 (MSRG…SPDA) and 102 to 170 (SADS…GSST). Residues 8-20 (GSQAMASSQAAGP) are compositionally biased toward low complexity. The segment covering 123 to 132 (PNPTTSTTQG) has biased composition (polar residues). Positions 151–170 (SGSRMQKSSSSGKSSGGSST) are enriched in low complexity.

Belongs to the MOZART2 family. Part of the gamma-tubulin complex. Interacts with TUBG1.

Its subcellular location is the cytoplasm. It is found in the cytoskeleton. It localises to the microtubule organizing center. The protein localises to the centrosome. The protein resides in the spindle. This is Mitotic-spindle organizing protein 2B (mzt2b) from Xenopus tropicalis (Western clawed frog).